The primary structure comprises 126 residues: Ribosome-binding factor A (126 aa).

Belongs to the RbfA family. In terms of assembly, monomer. Binds 30S ribosomal subunits, but not 50S ribosomal subunits or 70S ribosomes.

It localises to the cytoplasm. Its function is as follows. One of several proteins that assist in the late maturation steps of the functional core of the 30S ribosomal subunit. Associates with free 30S ribosomal subunits (but not with 30S subunits that are part of 70S ribosomes or polysomes). Required for efficient processing of 16S rRNA. May interact with the 5'-terminal helix region of 16S rRNA. In Haemophilus ducreyi (strain 35000HP / ATCC 700724), this protein is Ribosome-binding factor A.